The primary structure comprises 896 residues: Valine--tRNA ligase (896 aa).

Residues 48–58 (PNVTGSLHMGH) carry the 'HIGH' region motif. A 'KMSKS' region motif is present at residues 543-547 (KMSKS). Lysine 546 contacts ATP. Residues 830–896 (VIDLDAERTR…ARLGAALERL (67 aa)) are a coiled coil.

This sequence belongs to the class-I aminoacyl-tRNA synthetase family. ValS type 1 subfamily. In terms of assembly, monomer.

It localises to the cytoplasm. It carries out the reaction tRNA(Val) + L-valine + ATP = L-valyl-tRNA(Val) + AMP + diphosphate. In terms of biological role, catalyzes the attachment of valine to tRNA(Val). As ValRS can inadvertently accommodate and process structurally similar amino acids such as threonine, to avoid such errors, it has a 'posttransfer' editing activity that hydrolyzes mischarged Thr-tRNA(Val) in a tRNA-dependent manner. This Granulibacter bethesdensis (strain ATCC BAA-1260 / CGDNIH1) protein is Valine--tRNA ligase.